Here is a 334-residue protein sequence, read N- to C-terminus: GTP 3',8-cyclase (334 aa).

Residues 11–236 (GFNRKIDYLR…ESTESSQGPA (226 aa)) form the Radical SAM core domain. A GTP-binding site is contributed by R20. Positions 27 and 31 each coordinate [4Fe-4S] cluster. An S-adenosyl-L-methionine-binding site is contributed by Y33. A [4Fe-4S] cluster-binding site is contributed by C34. R69 contacts GTP. G73 contributes to the S-adenosyl-L-methionine binding site. T100 provides a ligand contact to GTP. S124 is a binding site for S-adenosyl-L-methionine. A GTP-binding site is contributed by K161. Residue M195 participates in S-adenosyl-L-methionine binding. C260 and C263 together coordinate [4Fe-4S] cluster. Residue 265–267 (RVR) coordinates GTP. C277 lines the [4Fe-4S] cluster pocket.

It belongs to the radical SAM superfamily. MoaA family. As to quaternary structure, monomer and homodimer. [4Fe-4S] cluster serves as cofactor.

It carries out the reaction GTP + AH2 + S-adenosyl-L-methionine = (8S)-3',8-cyclo-7,8-dihydroguanosine 5'-triphosphate + 5'-deoxyadenosine + L-methionine + A + H(+). It functions in the pathway cofactor biosynthesis; molybdopterin biosynthesis. Its function is as follows. Catalyzes the cyclization of GTP to (8S)-3',8-cyclo-7,8-dihydroguanosine 5'-triphosphate. The polypeptide is GTP 3',8-cyclase (Pseudomonas putida (strain W619)).